A 457-amino-acid chain; its full sequence is ATP synthase subunit beta (457 aa).

Residue 147 to 154 coordinates ATP; sequence GGAGVGKT.

Belongs to the ATPase alpha/beta chains family. In terms of assembly, F-type ATPases have 2 components, CF(1) - the catalytic core - and CF(0) - the membrane proton channel. CF(1) has five subunits: alpha(3), beta(3), gamma(1), delta(1), epsilon(1). CF(0) has three main subunits: a(1), b(2) and c(9-12). The alpha and beta chains form an alternating ring which encloses part of the gamma chain. CF(1) is attached to CF(0) by a central stalk formed by the gamma and epsilon chains, while a peripheral stalk is formed by the delta and b chains.

The protein resides in the cell inner membrane. The enzyme catalyses ATP + H2O + 4 H(+)(in) = ADP + phosphate + 5 H(+)(out). Its function is as follows. Produces ATP from ADP in the presence of a proton gradient across the membrane. The catalytic sites are hosted primarily by the beta subunits. This chain is ATP synthase subunit beta, found in Actinobacillus pleuropneumoniae serotype 5b (strain L20).